Consider the following 328-residue polypeptide: Src kinase-associated phosphoprotein 2 (328 aa).

One can recognise a PH domain in the interval 103–206 (EYLRAGYLEK…WVNIIMNSRG (104 aa)). The segment at 231-262 (IYEELPEESEKPVTEIETPKATPVPVNNTSGK) is disordered. A compositionally biased stretch (basic and acidic residues) spans 238–248 (ESEKPVTEIET). The region spanning 266–327 (DYANFYRGLW…PKAYIMEMYD (62 aa)) is the SH3 domain.

This sequence belongs to the SKAP family. Phosphorylated on tyrosines.

Its subcellular location is the cytoplasm. Its function is as follows. May be involved in B-cell and macrophage adhesion processes. May play a role in src signaling pathway. This is Src kinase-associated phosphoprotein 2 (skap2) from Xenopus tropicalis (Western clawed frog).